The sequence spans 415 residues: ATP-dependent RNA helicase RhlB (415 aa).

Positions 9 to 37 match the Q motif motif; sequence QRFSALPLHPIVRGALAKKGFDFCTPIQA. In terms of domain architecture, Helicase ATP-binding spans 40-218; that stretch reads LPISLNGRDV…FEDMNDPEYI (179 aa). 53 to 60 contacts ATP; the sequence is AQTGTGKT. The DEAD box signature appears at 164 to 167; it reads DEAD. The Helicase C-terminal domain maps to 241-389; the sequence is DKMALLLTLM…VSQYETEALL (149 aa).

Belongs to the DEAD box helicase family. RhlB subfamily. In terms of assembly, component of the RNA degradosome, which is a multiprotein complex involved in RNA processing and mRNA degradation.

It is found in the cytoplasm. It catalyses the reaction ATP + H2O = ADP + phosphate + H(+). Its function is as follows. DEAD-box RNA helicase involved in RNA degradation. Has RNA-dependent ATPase activity and unwinds double-stranded RNA. This Haemophilus influenzae (strain PittGG) protein is ATP-dependent RNA helicase RhlB.